A 228-amino-acid chain; its full sequence is Cytidylate kinase (228 aa).

ATP is bound at residue 17–25 (GPTASGKGT).

This sequence belongs to the cytidylate kinase family. Type 1 subfamily.

It is found in the cytoplasm. The catalysed reaction is CMP + ATP = CDP + ADP. It carries out the reaction dCMP + ATP = dCDP + ADP. In Burkholderia vietnamiensis (strain G4 / LMG 22486) (Burkholderia cepacia (strain R1808)), this protein is Cytidylate kinase.